A 491-amino-acid chain; its full sequence is uncharacterized protein (491 aa).

12 consecutive transmembrane segments (helical) span residues L48–C68, A85–L105, R112–A132, I140–I160, A174–I194, W202–L222, P277–L297, L317–I337, V358–T378, T383–W403, T408–V428, and L455–G475.

This sequence belongs to the major facilitator superfamily.

The protein resides in the membrane. This is an uncharacterized protein from Schizosaccharomyces pombe (strain 972 / ATCC 24843) (Fission yeast).